Consider the following 390-residue polypeptide: Galactokinase (390 aa).

33–36 (EHTD) is a substrate binding site. ATP is bound by residues Ser67 and 124 to 130 (GSGLSSS). Residues Ser130 and Glu162 each contribute to the Mg(2+) site. The active-site Proton acceptor is Asp174. Tyr224 is a binding site for substrate.

This sequence belongs to the GHMP kinase family. GalK subfamily.

Its subcellular location is the cytoplasm. The enzyme catalyses alpha-D-galactose + ATP = alpha-D-galactose 1-phosphate + ADP + H(+). Its pathway is carbohydrate metabolism; galactose metabolism. Its function is as follows. Catalyzes the transfer of the gamma-phosphate of ATP to D-galactose to form alpha-D-galactose-1-phosphate (Gal-1-P). The sequence is that of Galactokinase from Streptococcus mutans serotype c (strain ATCC 700610 / UA159).